We begin with the raw amino-acid sequence, 157 residues long: C-type lectin 9a (157 aa).

The N-terminal stretch at Met-1–Ala-23 is a signal peptide. 3 disulfide bridges follow: Cys-27/Cys-38, Cys-55/Cys-151, and Cys-126/Cys-143. Residues Tyr-34–Lys-152 form the C-type lectin domain.

The protein belongs to the snaclec family. In terms of assembly, heteromultimer; disulfide-linked. Expressed by the venom gland.

It is found in the secreted. Interferes with one step of hemostasis (modulation of platelet aggregation, or coagulation cascade, for example). The sequence is that of C-type lectin 9a from Crotalus adamanteus (Eastern diamondback rattlesnake).